The sequence spans 238 residues: Dof zinc finger protein MNB1A (238 aa).

The span at 1-13 (MQEASSAAAAGAE) shows a compositional bias: low complexity. The tract at residues 1 to 48 (MQEASSAAAAGAEPGRRAAQHQFAGVDLRRPKGYAAPAPAPAVGEGDP) is disordered. The Dof-type zinc-finger motif lies at 47–101 (DPCPRCASRDTKFCYYNNYNTSQPRHFCKGCRRYWTKGGTLRNVPVGGGTRKKPS). Zn(2+) contacts are provided by C49, C52, C74, and C77. Residues 85 to 155 (GTLRNVPVGG…TATTTTTTSE (71 aa)) form a disordered region. Residues 119 to 130 (PKKKPASKKRRV) show a composition bias toward basic residues. Over residues 138–155 (ATAADPGKTATTTTTTSE) the composition is skewed to low complexity.

In terms of tissue distribution, expressed in all tissues examined.

Its subcellular location is the nucleus. Transcription factor that binds specifically to a 5'-AA[AG]G-3' consensus core sequence at the MNF1-binding site. In Zea mays (Maize), this protein is Dof zinc finger protein MNB1A (MNB1A).